The following is a 362-amino-acid chain: Transcription factor bHLH133 (362 aa).

A bHLH domain is found at Leu209–Leu258.

This sequence belongs to the bHLH protein family. Homodimer.

It is found in the nucleus. The chain is Transcription factor bHLH133 (BHLH133) from Arabidopsis thaliana (Mouse-ear cress).